A 452-amino-acid chain; its full sequence is Pup--protein ligase (452 aa).

Glu9 lines the Mg(2+) pocket. Position 53 (Arg53) interacts with ATP. Mg(2+) is bound at residue Tyr55. The active-site Proton acceptor is Asp57. Position 63 (Glu63) interacts with Mg(2+). ATP contacts are provided by Thr66 and Trp419.

This sequence belongs to the Pup ligase/Pup deamidase family. Pup-conjugating enzyme subfamily.

It catalyses the reaction ATP + [prokaryotic ubiquitin-like protein]-L-glutamate + [protein]-L-lysine = ADP + phosphate + N(6)-([prokaryotic ubiquitin-like protein]-gamma-L-glutamyl)-[protein]-L-lysine.. The protein operates within protein degradation; proteasomal Pup-dependent pathway. Its pathway is protein modification; protein pupylation. In terms of biological role, catalyzes the covalent attachment of the prokaryotic ubiquitin-like protein modifier Pup to the proteasomal substrate proteins, thereby targeting them for proteasomal degradation. This tagging system is termed pupylation. The ligation reaction involves the side-chain carboxylate of the C-terminal glutamate of Pup and the side-chain amino group of a substrate lysine. The chain is Pup--protein ligase from Streptosporangium roseum (strain ATCC 12428 / DSM 43021 / JCM 3005 / KCTC 9067 / NCIMB 10171 / NRRL 2505 / NI 9100).